A 188-amino-acid polypeptide reads, in one-letter code: dCTP deaminase (188 aa).

DCTP-binding positions include Lys111–Arg116, Thr135–Glu137, Gln156, Tyr170, and Gln180. Residue Glu137 is the Proton donor/acceptor of the active site.

The protein belongs to the dCTP deaminase family. Homotrimer.

The enzyme catalyses dCTP + H2O + H(+) = dUTP + NH4(+). The protein operates within pyrimidine metabolism; dUMP biosynthesis; dUMP from dCTP (dUTP route): step 1/2. In terms of biological role, catalyzes the deamination of dCTP to dUTP. In Aromatoleum aromaticum (strain DSM 19018 / LMG 30748 / EbN1) (Azoarcus sp. (strain EbN1)), this protein is dCTP deaminase.